A 476-amino-acid chain; its full sequence is Elongation factor Tu, chloroplastic (476 aa).

The transit peptide at 1 to 67 (MAISAPAACS…QSTRRSFTVR (67 aa)) directs the protein to the chloroplast. The tr-type G domain occupies 77 to 281 (KPHVNIGTIG…AVDDYIPIPQ (205 aa)). The segment at 86–93 (GHVDHGKT) is G1. Position 86–93 (86–93 (GHVDHGKT)) interacts with GTP. Residue T94 is modified to Phosphothreonine. The interval 127–131 (GITIN) is G2. Residues 148-151 (DCPG) form a G3 region. GTP-binding positions include 148–152 (DCPGH) and 203–206 (NKED). The interval 203 to 206 (NKED) is G4. Positions 241 to 243 (SAL) are G5.

It belongs to the TRAFAC class translation factor GTPase superfamily. Classic translation factor GTPase family. EF-Tu/EF-1A subfamily. As to quaternary structure, interacts with PI5K2. Interacts with APD2.

It localises to the plastid. Its subcellular location is the chloroplast. In terms of biological role, this protein promotes the GTP-dependent binding of aminoacyl-tRNA to the A-site of ribosomes during protein biosynthesis. The chain is Elongation factor Tu, chloroplastic (TUFA) from Arabidopsis thaliana (Mouse-ear cress).